A 395-amino-acid polypeptide reads, in one-letter code: Transcriptional coactivator yorkie (395 aa).

The tract at residues 73-100 (NSFFTPPAPSHSRANSADSTYDAGSQSS) is disordered. A phosphoserine mark is found at S82, S88, S100, S117, and S145. The segment covering 84 to 100 (SRANSADSTYDAGSQSS) has biased composition (polar residues). Disordered stretches follow at residues 129–150 (PSPQ…PASL) and 162–199 (AAAA…PASS). Position 146 is a phosphoserine; by CDK7 (S146). S149 is subject to Phosphoserine. Low complexity predominate over residues 162–179 (AAAANNPNANPSSQQQPA). A Phosphoserine modification is found at S227. Residue Y228 is modified to Phosphotyrosine. S232 carries the post-translational modification Phosphoserine. 2 consecutive WW domains span residues 241–274 (GALP…DPRI) and 310–343 (GPLP…DPRM).

Belongs to the YAP1 family. As to quaternary structure, interacts (via WW domains) with wts. Interacts (via N-terminus) with sd (via C-terminus) and this interaction enhances the transcriptional activity of sd. The phosphorylated form interacts with 14-3-3epsilon and 14-3-3zeta. Interacts with Ack and ex. Its activity is regulated by multiple phosphorylation events. Phosphorylation at Ser-88, Ser-145 and Ser-227 negatively regulate its activity and restrict its nuclear localization. Wts-mediated phosphorylation at Ser-145 promotes interaction with 14-3-3epsilon and 14-3-3zeta. Phosphorylation at Ser-88 and Ser-227 regulate nuclear localization and activity independent of 14-3-3 association. Phosphorylation at Ser-146 by Cdk7 promotes its stability by preventing ubiquitination by the DCX(DCAF12) complex. In terms of processing, ubiquitinated by the DCX(DCAF12) complex, leading to its degradation. Phosphorylation at Ser-146 by Cdk7 prevents ubiquitination by the DCX(DCAF12) complex.

It localises to the cytoplasm. The protein localises to the nucleus. In terms of biological role, transcriptional coactivator which is the critical downstream regulatory target in the Hippo/SWH (Sav/Wts/Hpo) signaling pathway that plays a pivotal role in organ size control and tumor suppression by restricting proliferation and promoting apoptosis. The core of this pathway is composed of a kinase cascade wherein Hippo (Hpo), in complex with its regulatory protein Salvador (Sav), phosphorylates and activates Warts (Wts) in complex with its regulatory protein Mats, which in turn phosphorylates and inactivates the Yorkie (Yki) oncoprotein. The Hippo/SWH signaling pathway inhibits the activity of the transcriptional complex formed by Scalloped (sd) and Yki and the target genes of this pathway include cyclin-E (cycE), diap1 and bantam. Regulates the expression of G1/S-specific CycE and diap1, thereby promoting cell proliferation and inhibiting apoptosis. Required for transcriptional activity of sd in wing imaginal disks. Induces expression of expression of vestigial (vg) in wing and haltere disks and the expression of transcription factor E2f (E2f). The polypeptide is Transcriptional coactivator yorkie (yki) (Drosophila melanogaster (Fruit fly)).